Here is a 159-residue protein sequence, read N- to C-terminus: MHRIAVVPGSFDPVTLGHLDVIERAARMWDEVHVLVVHNPDKSALLPIAQRVALLDRSIEDAGIAGNIVASWSVGLLVDYCTDIGAHVLVKGIRSQVDVAYETPMAIVNRHLAEVETVFLLPNPANAHVSSSLVRQVASLGGDVSPYVPAAVSELLSSS.

Position 10 (S10) interacts with substrate. Residues 10-11 and H18 contribute to the ATP site; that span reads SF. Substrate is bound by residues K42, L77, and K91. ATP contacts are provided by residues 92–94, E102, and 126–132; these read GIR and NAHVSSS.

This sequence belongs to the bacterial CoaD family. In terms of assembly, homohexamer. The cofactor is Mg(2+).

The protein localises to the cytoplasm. The enzyme catalyses (R)-4'-phosphopantetheine + ATP + H(+) = 3'-dephospho-CoA + diphosphate. It functions in the pathway cofactor biosynthesis; coenzyme A biosynthesis; CoA from (R)-pantothenate: step 4/5. Functionally, reversibly transfers an adenylyl group from ATP to 4'-phosphopantetheine, yielding dephospho-CoA (dPCoA) and pyrophosphate. The chain is Phosphopantetheine adenylyltransferase from Leifsonia xyli subsp. xyli (strain CTCB07).